A 160-amino-acid chain; its full sequence is Lipoprotein signal peptidase (160 aa).

The next 3 membrane-spanning stretches (helical) occupy residues 5–25 (LVFF…KFII), 60–80 (IEWL…AFFI), and 84–104 (LPFL…AGTV). Active-site residues include Asp118 and Asp132. Residues 128-148 (FNIADSCLTVGVIGLLLLYIV) form a helical membrane-spanning segment.

It belongs to the peptidase A8 family.

It localises to the cell membrane. The catalysed reaction is Release of signal peptides from bacterial membrane prolipoproteins. Hydrolyzes -Xaa-Yaa-Zaa-|-(S,diacylglyceryl)Cys-, in which Xaa is hydrophobic (preferably Leu), and Yaa (Ala or Ser) and Zaa (Gly or Ala) have small, neutral side chains.. Its pathway is protein modification; lipoprotein biosynthesis (signal peptide cleavage). Its function is as follows. This protein specifically catalyzes the removal of signal peptides from prolipoproteins. This Dehalococcoides mccartyi (strain ATCC BAA-2100 / JCM 16839 / KCTC 5957 / BAV1) protein is Lipoprotein signal peptidase.